Here is a 284-residue protein sequence, read N- to C-terminus: Release factor glutamine methyltransferase (284 aa).

S-adenosyl-L-methionine-binding positions include 125–129, glutamate 148, and asparagine 190; that span reads GVGSG. 190-193 contacts substrate; it reads NPPY.

The protein belongs to the protein N5-glutamine methyltransferase family. PrmC subfamily.

It catalyses the reaction L-glutaminyl-[peptide chain release factor] + S-adenosyl-L-methionine = N(5)-methyl-L-glutaminyl-[peptide chain release factor] + S-adenosyl-L-homocysteine + H(+). In terms of biological role, methylates the class 1 translation termination release factors RF1/PrfA and RF2/PrfB on the glutamine residue of the universally conserved GGQ motif. This is Release factor glutamine methyltransferase from Geobacter sulfurreducens (strain ATCC 51573 / DSM 12127 / PCA).